A 460-amino-acid polypeptide reads, in one-letter code: MLQIYNTLSKTKEVFTPLVGNQVRMYVCGMTVYDYCHLGHGRSMVAFDVITRWLRHRGYDLTYVRNITDIDDKIINRANENGEPFDVLTERMIAAMHEDEARLNILKPDQEPRATDHIAGMHAMIQTLIDKGYAYAPGNGDVYYRVGKFAGYGKLSRRRVEDLRIGARIEPGEAKEDPLDFVLWKGAKPGEPSWSSPWGEGRPGWHIECSVMSTCCLGDSFDIHGGGNDLEFPHHENEIAQSEAATGKPYAKSWLHCGMITINGEKMSKSLGNFFTIREVLEKYHPEVVRYLLIASHYRSPINYSEENLREAKAALDRFYNALKGLPEAAPAEAAEYVERFAAAMDDDFNTAGACSVLFELAREVNRLRESDLSAAAALAARLKQLAGLLGVLQLEPEAFLQAGAEGKVDAAEVEALIQARLEARAAKNWAESDRIRDQLTAMGVVLEDGKGGTTWRLAD.

Position 28 (Cys28) interacts with Zn(2+). The 'HIGH' region signature appears at 30–40 (MTVYDYCHLGH). Zn(2+) contacts are provided by Cys209, His234, and Glu238. The short motif at 266–270 (KMSKS) is the 'KMSKS' region element. Lys269 is an ATP binding site.

It belongs to the class-I aminoacyl-tRNA synthetase family. Monomer. Requires Zn(2+) as cofactor.

It is found in the cytoplasm. It carries out the reaction tRNA(Cys) + L-cysteine + ATP = L-cysteinyl-tRNA(Cys) + AMP + diphosphate. This is Cysteine--tRNA ligase from Pseudomonas aeruginosa (strain LESB58).